The following is a 701-amino-acid chain: Elongation factor G (701 aa).

A tr-type G domain is found at 8 to 290 (SLYRNIGISA…AVVELLPAPT (283 aa)). Residues 17–24 (AHIDAGKT), 88–92 (DTPGH), and 142–145 (NKMD) contribute to the GTP site.

This sequence belongs to the TRAFAC class translation factor GTPase superfamily. Classic translation factor GTPase family. EF-G/EF-2 subfamily.

Its subcellular location is the cytoplasm. In terms of biological role, catalyzes the GTP-dependent ribosomal translocation step during translation elongation. During this step, the ribosome changes from the pre-translocational (PRE) to the post-translocational (POST) state as the newly formed A-site-bound peptidyl-tRNA and P-site-bound deacylated tRNA move to the P and E sites, respectively. Catalyzes the coordinated movement of the two tRNA molecules, the mRNA and conformational changes in the ribosome. This Neisseria meningitidis serogroup B (strain ATCC BAA-335 / MC58) protein is Elongation factor G.